The sequence spans 261 residues: Protein-ADP-ribose hydrolase (261 aa).

The Macro domain maps to 74 to 261 (ADLKPVTGRG…DEALYNKLMS (188 aa)). ADP-D-ribose is bound by residues Asp93, Ile94, and Asn107. Positions 113, 118, and 120 each coordinate Zn(2+). 7 residues coordinate ADP-D-ribose: Cys120, Ile121, Asp122, Ser211, Thr212, Gly213, and Phe215.

Belongs to the MacroD-type family. Zn-Macro subfamily. Requires Zn(2+) as cofactor.

It catalyses the reaction 4-O-(ADP-D-ribosyl)-L-aspartyl-[protein] + H2O = L-aspartyl-[protein] + ADP-D-ribose + H(+). In terms of biological role, ADP-ribosylhydrolase that specifically reverses the SirTM-mediated mono-ADP-ribosylation at an asparatate residue of GcvH-L, by releasing ADP-ribose from the target protein. May play a role in the regulation of the response to host-induced oxidative stress. This chain is Protein-ADP-ribose hydrolase, found in Treponema medium.